Here is a 214-residue protein sequence, read N- to C-terminus: A-type ATP synthase subunit D (214 aa).

Belongs to the V-ATPase D subunit family. As to quaternary structure, has multiple subunits with at least A(3), B(3), C, D, E, F, H, I and proteolipid K(x).

The protein resides in the cell membrane. In terms of biological role, component of the A-type ATP synthase that produces ATP from ADP in the presence of a proton gradient across the membrane. In Thermococcus sibiricus (strain DSM 12597 / MM 739), this protein is A-type ATP synthase subunit D.